The primary structure comprises 876 residues: Leucine--tRNA ligase (876 aa).

Residues 43–53 (PYPSGRIHMGH) carry the 'HIGH' region motif. Positions 632–636 (KMSKS) match the 'KMSKS' region motif. Position 635 (K635) interacts with ATP.

This sequence belongs to the class-I aminoacyl-tRNA synthetase family.

It is found in the cytoplasm. The enzyme catalyses tRNA(Leu) + L-leucine + ATP = L-leucyl-tRNA(Leu) + AMP + diphosphate. This is Leucine--tRNA ligase from Rhizobium etli (strain CIAT 652).